Here is a 298-residue protein sequence, read N- to C-terminus: Inosose dehydratase (298 aa).

It belongs to the IolE/MocC family. Glutathione is required as a cofactor. Requires Co(2+) as cofactor. The cofactor is Mn(2+).

It carries out the reaction scyllo-inosose = 3D-3,5/4-trihydroxycyclohexane-1,2-dione + H2O. The protein operates within polyol metabolism; myo-inositol degradation into acetyl-CoA; acetyl-CoA from myo-inositol: step 2/7. Functionally, catalyzes the dehydration of inosose (2-keto-myo-inositol, 2KMI or 2,4,6/3,5-pentahydroxycyclohexanone) to 3D-(3,5/4)-trihydroxycyclohexane-1,2-dione (D-2,3-diketo-4-deoxy-epi-inositol). This chain is Inosose dehydratase, found in Bacillus velezensis (strain DSM 23117 / BGSC 10A6 / LMG 26770 / FZB42) (Bacillus amyloliquefaciens subsp. plantarum).